A 278-amino-acid polypeptide reads, in one-letter code: 3-methyl-2-oxobutanoate hydroxymethyltransferase (278 aa).

2 residues coordinate Mg(2+): Asp49 and Asp88. 3-methyl-2-oxobutanoate contacts are provided by residues 49-50 (DS), Asp88, and Lys118. Position 120 (Glu120) interacts with Mg(2+). Glu186 (proton acceptor) is an active-site residue.

The protein belongs to the PanB family. As to quaternary structure, homodecamer; pentamer of dimers. Mg(2+) serves as cofactor.

It is found in the cytoplasm. The catalysed reaction is 3-methyl-2-oxobutanoate + (6R)-5,10-methylene-5,6,7,8-tetrahydrofolate + H2O = 2-dehydropantoate + (6S)-5,6,7,8-tetrahydrofolate. It functions in the pathway cofactor biosynthesis; (R)-pantothenate biosynthesis; (R)-pantoate from 3-methyl-2-oxobutanoate: step 1/2. Functionally, catalyzes the reversible reaction in which hydroxymethyl group from 5,10-methylenetetrahydrofolate is transferred onto alpha-ketoisovalerate to form ketopantoate. The protein is 3-methyl-2-oxobutanoate hydroxymethyltransferase of Bordetella parapertussis (strain 12822 / ATCC BAA-587 / NCTC 13253).